The sequence spans 485 residues: Sulfated surface glycoprotein 185 (485 aa).

The signal sequence occupies residues 1–20 (MSKLLLVALFGAIAVVATSA). The N-linked (GlcNAc...) asparagine glycan is linked to N193. Residues 212–317 (LSGPNVNPIG…PPVPPPPSPP (106 aa)) are disordered. Composition is skewed to pro residues over residues 221–234 (GPAP…PSPQ) and 241–317 (PPSP…PSPP). N347 is a glycosylation site (N-linked (GlcNAc...) asparagine).

As to quaternary structure, polymer. Intersubunit cross-links are formed between saccharide chains rather than between polypeptide chains. In terms of processing, hydroxylated on proline residues in the Pro-rich central domain. Post-translationally, glycosylated; contains sulfate-substituted glycans.

The extracellular matrix (ECM) of Volvox contains insoluble fibrous layers that surround individual cells at a distance to form contiguous cellular compartments. SSG 185 is the monomeric precursor of this substructure (C3Z structure). The protein is Sulfated surface glycoprotein 185 of Volvox carteri (Green alga).